Reading from the N-terminus, the 183-residue chain is Holliday junction branch migration complex subunit RuvA (183 aa).

The segment at 1-64 (MIVAIEGIVS…EDSHKLYGFL (64 aa)) is domain I. The interval 65 to 138 (DTNEQRMFEL…SDAKINIENS (74 aa)) is domain II. Ser-138 is a region of interest (flexible linker). The domain III stretch occupies residues 138–183 (SNQDHAQALAALLSLGFKQENILKVLRTCESQNTSELIKEALKKLA).

Belongs to the RuvA family. As to quaternary structure, homotetramer. Forms an RuvA(8)-RuvB(12)-Holliday junction (HJ) complex. HJ DNA is sandwiched between 2 RuvA tetramers; dsDNA enters through RuvA and exits via RuvB. An RuvB hexamer assembles on each DNA strand where it exits the tetramer. Each RuvB hexamer is contacted by two RuvA subunits (via domain III) on 2 adjacent RuvB subunits; this complex drives branch migration. In the full resolvosome a probable DNA-RuvA(4)-RuvB(12)-RuvC(2) complex forms which resolves the HJ.

It is found in the cytoplasm. The RuvA-RuvB-RuvC complex processes Holliday junction (HJ) DNA during genetic recombination and DNA repair, while the RuvA-RuvB complex plays an important role in the rescue of blocked DNA replication forks via replication fork reversal (RFR). RuvA specifically binds to HJ cruciform DNA, conferring on it an open structure. The RuvB hexamer acts as an ATP-dependent pump, pulling dsDNA into and through the RuvAB complex. HJ branch migration allows RuvC to scan DNA until it finds its consensus sequence, where it cleaves and resolves the cruciform DNA. This is Holliday junction branch migration complex subunit RuvA from Campylobacter lari (strain RM2100 / D67 / ATCC BAA-1060).